Reading from the N-terminus, the 179-residue chain is Large ribosomal subunit protein uL5 (179 aa).

Belongs to the universal ribosomal protein uL5 family. As to quaternary structure, part of the 50S ribosomal subunit; part of the 5S rRNA/L5/L18/L25 subcomplex. Contacts the 5S rRNA and the P site tRNA. Forms a bridge to the 30S subunit in the 70S ribosome.

Functionally, this is one of the proteins that bind and probably mediate the attachment of the 5S RNA into the large ribosomal subunit, where it forms part of the central protuberance. In the 70S ribosome it contacts protein S13 of the 30S subunit (bridge B1b), connecting the 2 subunits; this bridge is implicated in subunit movement. Contacts the P site tRNA; the 5S rRNA and some of its associated proteins might help stabilize positioning of ribosome-bound tRNAs. The sequence is that of Large ribosomal subunit protein uL5 from Buchnera aphidicola subsp. Acyrthosiphon pisum (strain APS) (Acyrthosiphon pisum symbiotic bacterium).